A 190-amino-acid polypeptide reads, in one-letter code: MDAAGVAAKPSLSRKPSPSFRLRNGSLNALRLRRVFDLFDRNGDGEITLDEMASALDALGLGADRAGLEATVGGYIPAGAAGLRFGDFEALHRALGDALFGPVEEEEPGKQGEDDDEGDMKEAFRVFDEDGDGFISAAELQAVLKKLGLPEARNLATVQEMICNVDRDCDGRVDFGEFKCMMQGITVWGA.

EF-hand domains are found at residues 27 to 62 (LNAL…LGLG), 115 to 150 (DDEG…LGLP), and 153 to 188 (RNLA…ITVW). Ca(2+) is bound by residues aspartate 40, asparagine 42, aspartate 44, glutamate 46, glutamate 51, aspartate 128, aspartate 130, aspartate 132, glutamate 139, aspartate 166, aspartate 168, aspartate 170, arginine 172, and glutamate 177.

Potential calcium sensor. This Oryza sativa subsp. japonica (Rice) protein is Probable calcium-binding protein CML27 (CML27).